We begin with the raw amino-acid sequence, 288 residues long: Aquaporin PIP 1-3 (288 aa).

The tract at residues 1–30 is disordered; the sequence is MEGKEEDVRLGANRYTERQPIGTAAQGAEE. 2 helical membrane passes run 57 to 77 and 92 to 114; these read IAEF…VMGV and IAWS…SGGH. Residues 116–118 carry the NPA 1 motif; the sequence is NPA. 3 helical membrane-spanning segments follow: residues 135–155, 177–197, and 211–231; these read VFYM…VKGF, GDGL…VFSA, and ILAP…TIPI. Residues 237 to 239 carry the NPA 2 motif; it reads NPA. A helical membrane pass occupies residues 259–279; the sequence is IFWVGPFIGAALAAIYHVVVI.

This sequence belongs to the MIP/aquaporin (TC 1.A.8) family. PIP (TC 1.A.8.11) subfamily. Expressed in roots and leaves.

Its subcellular location is the cell membrane. Water channel required to facilitate the transport of water across cell membrane. Increases the capacity for root water uptake under water deficit. May play a role in drought avoidance in upland rice. In Oryza sativa subsp. japonica (Rice), this protein is Aquaporin PIP 1-3 (PIP1-3).